Consider the following 408-residue polypeptide: Succinylornithine transaminase (408 aa).

Lysine 252 carries the N6-(pyridoxal phosphate)lysine modification.

This sequence belongs to the class-III pyridoxal-phosphate-dependent aminotransferase family. AstC subfamily. The cofactor is pyridoxal 5'-phosphate.

It catalyses the reaction N(2)-succinyl-L-ornithine + 2-oxoglutarate = N-succinyl-L-glutamate 5-semialdehyde + L-glutamate. Its pathway is amino-acid degradation; L-arginine degradation via AST pathway; L-glutamate and succinate from L-arginine: step 3/5. Catalyzes the transamination of N(2)-succinylornithine and alpha-ketoglutarate into N(2)-succinylglutamate semialdehyde and glutamate. Can also act as an acetylornithine aminotransferase. The sequence is that of Succinylornithine transaminase from Salmonella choleraesuis (strain SC-B67).